The sequence spans 1159 residues: ATP-dependent helicase/deoxyribonuclease subunit B (1159 aa).

8-15 (GRAGSGKT) serves as a coordination point for ATP. [4Fe-4S] cluster-binding residues include Cys-784, Cys-1102, Cys-1105, and Cys-1111. Residues 1140–1159 (VKEDGSQVDGRTEGSDNNEG) form a disordered region.

The protein belongs to the helicase family. AddB/RexB type 1 subfamily. Heterodimer of AddA and AddB. Mg(2+) is required as a cofactor. It depends on [4Fe-4S] cluster as a cofactor.

Its function is as follows. The heterodimer acts as both an ATP-dependent DNA helicase and an ATP-dependent, dual-direction single-stranded exonuclease. Recognizes the chi site generating a DNA molecule suitable for the initiation of homologous recombination. The AddB subunit has 5' -&gt; 3' nuclease activity but not helicase activity. The chain is ATP-dependent helicase/deoxyribonuclease subunit B from Caldanaerobacter subterraneus subsp. tengcongensis (strain DSM 15242 / JCM 11007 / NBRC 100824 / MB4) (Thermoanaerobacter tengcongensis).